The chain runs to 760 residues: 5-methyltetrahydropteroyltriglutamate--homocysteine methyltransferase (760 aa).

5-methyltetrahydropteroyltri-L-glutamate-binding positions include 17-20 (RELK) and Lys118. L-homocysteine-binding positions include 434–436 (IGS) and Glu487. L-methionine-binding positions include 434–436 (IGS) and Glu487. 5-methyltetrahydropteroyltri-L-glutamate-binding positions include 518–519 (RC) and Trp564. Asp602 lines the L-homocysteine pocket. Residue Asp602 participates in L-methionine binding. Glu608 contacts 5-methyltetrahydropteroyltri-L-glutamate. Zn(2+) contacts are provided by His644, Cys646, and Glu668. His697 serves as the catalytic Proton donor. Position 729 (Cys729) interacts with Zn(2+).

This sequence belongs to the vitamin-B12 independent methionine synthase family. The cofactor is Zn(2+).

It catalyses the reaction 5-methyltetrahydropteroyltri-L-glutamate + L-homocysteine = tetrahydropteroyltri-L-glutamate + L-methionine. Its pathway is amino-acid biosynthesis; L-methionine biosynthesis via de novo pathway; L-methionine from L-homocysteine (MetE route): step 1/1. Functionally, catalyzes the transfer of a methyl group from 5-methyltetrahydrofolate to homocysteine resulting in methionine formation. This chain is 5-methyltetrahydropteroyltriglutamate--homocysteine methyltransferase, found in Buchnera aphidicola subsp. Cinara cedri (strain Cc).